Reading from the N-terminus, the 510-residue chain is D-alanine--D-alanyl carrier protein ligase (510 aa).

ATP is bound at residue 157 to 158 (TS). Residue Asp202 coordinates D-alanine. Residue 297-302 (NTYGPT) coordinates ATP. Val306 is a D-alanine binding site. 2 residues coordinate ATP: Asp389 and Lys498. D-alanine is bound at residue Lys498.

The protein belongs to the ATP-dependent AMP-binding enzyme family. DltA subfamily.

Its subcellular location is the cytoplasm. It carries out the reaction holo-[D-alanyl-carrier protein] + D-alanine + ATP = D-alanyl-[D-alanyl-carrier protein] + AMP + diphosphate. It participates in cell wall biogenesis; lipoteichoic acid biosynthesis. In terms of biological role, catalyzes the first step in the D-alanylation of lipoteichoic acid (LTA), the activation of D-alanine and its transfer onto the D-alanyl carrier protein (Dcp) DltC. In an ATP-dependent two-step reaction, forms a high energy D-alanyl-AMP intermediate, followed by transfer of the D-alanyl residue as a thiol ester to the phosphopantheinyl prosthetic group of the Dcp. D-alanylation of LTA plays an important role in modulating the properties of the cell wall in Gram-positive bacteria, influencing the net charge of the cell wall. In Listeria monocytogenes serotype 4a (strain HCC23), this protein is D-alanine--D-alanyl carrier protein ligase.